Here is a 507-residue protein sequence, read N- to C-terminus: Transmembrane protein 184 homolog DDB_G0276041 (507 aa).

7 helical membrane passes run Ile-13–Leu-33, Ile-50–Phe-70, Ala-88–Leu-108, Leu-141–Leu-161, Leu-179–Phe-199, Val-222–Leu-242, and Phe-260–Ser-280. N-linked (GlcNAc...) asparagine glycans are attached at residues Asn-360, Asn-375, Asn-470, Asn-473, Asn-477, and Asn-498. Residues Asn-448–Ser-500 form a disordered region. Residues Ser-451–Ser-500 show a composition bias toward low complexity.

It belongs to the TMEM184 family.

The protein localises to the cell membrane. Functionally, probable transporter. This is Transmembrane protein 184 homolog DDB_G0276041 (tmem184B) from Dictyostelium discoideum (Social amoeba).